The chain runs to 414 residues: uncharacterized protein (414 aa).

Disordered regions lie at residues 136–168, 298–322, and 350–382; these read SSKSMAPTAEKELEKPLENGSELQEGDSLTVPT, KNFPDSGMRRAVQTPSPQNKMSYHR, and PPHSRPMHGSYNKVHVNKEPKPNLSPDKYMSTS.

This is an uncharacterized protein from Macaca fascicularis (Crab-eating macaque).